We begin with the raw amino-acid sequence, 285 residues long: NADPH-dependent 7-cyano-7-deazaguanine reductase (285 aa).

Substrate is bound at residue 91-93 (IES). NADPH is bound at residue 93–94 (SK). The active-site Thioimide intermediate is cysteine 193. Catalysis depends on aspartate 200, which acts as the Proton donor. 232 to 233 (HE) contacts substrate. 261–262 (RG) is a binding site for NADPH.

Belongs to the GTP cyclohydrolase I family. QueF type 2 subfamily. Homodimer.

Its subcellular location is the cytoplasm. The catalysed reaction is 7-aminomethyl-7-carbaguanine + 2 NADP(+) = 7-cyano-7-deazaguanine + 2 NADPH + 3 H(+). It participates in tRNA modification; tRNA-queuosine biosynthesis. Catalyzes the NADPH-dependent reduction of 7-cyano-7-deazaguanine (preQ0) to 7-aminomethyl-7-deazaguanine (preQ1). This Shewanella baltica (strain OS223) protein is NADPH-dependent 7-cyano-7-deazaguanine reductase.